The following is a 130-amino-acid chain: Small ribosomal subunit protein uS8 (130 aa).

Belongs to the universal ribosomal protein uS8 family. In terms of assembly, part of the 30S ribosomal subunit. Contacts proteins S5 and S12.

Its function is as follows. One of the primary rRNA binding proteins, it binds directly to 16S rRNA central domain where it helps coordinate assembly of the platform of the 30S subunit. This chain is Small ribosomal subunit protein uS8, found in Actinobacillus succinogenes (strain ATCC 55618 / DSM 22257 / CCUG 43843 / 130Z).